The sequence spans 674 residues: DNA ligase (674 aa).

NAD(+) contacts are provided by residues 34–38 (DSEYD), 83–84 (SL), and Glu-114. The active-site N6-AMP-lysine intermediate is Lys-116. NAD(+)-binding residues include Arg-137, Glu-174, Lys-290, and Lys-314. Residues Cys-405, Cys-408, Cys-424, and Cys-429 each contribute to the Zn(2+) site. A BRCT domain is found at 587 to 674 (QSGTQFDGKM…KLSLIENTKF (88 aa)).

This sequence belongs to the NAD-dependent DNA ligase family. LigA subfamily. Requires Mg(2+) as cofactor. The cofactor is Mn(2+).

The catalysed reaction is NAD(+) + (deoxyribonucleotide)n-3'-hydroxyl + 5'-phospho-(deoxyribonucleotide)m = (deoxyribonucleotide)n+m + AMP + beta-nicotinamide D-nucleotide.. DNA ligase that catalyzes the formation of phosphodiester linkages between 5'-phosphoryl and 3'-hydroxyl groups in double-stranded DNA using NAD as a coenzyme and as the energy source for the reaction. It is essential for DNA replication and repair of damaged DNA. This is DNA ligase from Endomicrobium trichonymphae.